A 292-amino-acid chain; its full sequence is Glycine--tRNA ligase alpha subunit (292 aa).

Belongs to the class-II aminoacyl-tRNA synthetase family. In terms of assembly, tetramer of two alpha and two beta subunits.

Its subcellular location is the cytoplasm. The catalysed reaction is tRNA(Gly) + glycine + ATP = glycyl-tRNA(Gly) + AMP + diphosphate. The sequence is that of Glycine--tRNA ligase alpha subunit from Geobacter sulfurreducens (strain ATCC 51573 / DSM 12127 / PCA).